The primary structure comprises 580 residues: Putative ankyrin repeat protein L63 (580 aa).

14 ANK repeats span residues 81-110, 111-140, 141-170, 172-200, 202-230, 314-339, 340-369, 370-399, 400-429, 431-459, 461-489, 490-519, 521-549, and 551-579; these read SLNR…DFRI, DNDY…NIGA, NDNC…DINA, NNYP…DIRA, DDYV…VLNK, SLDD…LLGA, SERK…NIKC, GSNC…DINS, GNNY…NIRA, NDRA…NIRA, DDRA…DIKA, GDDY…NIKA, DDYA…DIRA, and NNYA…VINP.

This chain is Putative ankyrin repeat protein L63, found in Acanthamoeba polyphaga (Amoeba).